We begin with the raw amino-acid sequence, 65 residues long: Small ribosomal subunit protein bS21A (65 aa).

This sequence belongs to the bacterial ribosomal protein bS21 family.

The protein is Small ribosomal subunit protein bS21A of Francisella tularensis subsp. tularensis (strain FSC 198).